Here is a 354-residue protein sequence, read N- to C-terminus: Protein-glutamate methylesterase/protein-glutamine glutaminase of group 3 operon (354 aa).

The Response regulatory domain occupies 3-121; it reads RILLATSTVE…MQLEQPAIEK (119 aa). A CheB-type methylesterase domain is found at 158-340; the sequence is PIGIVGIAAS…LESIAENITA (183 aa). Active-site residues include Ser167, His194, and Asp287.

It belongs to the CheB family.

It localises to the cytoplasm. It carries out the reaction [protein]-L-glutamate 5-O-methyl ester + H2O = L-glutamyl-[protein] + methanol + H(+). The enzyme catalyses L-glutaminyl-[protein] + H2O = L-glutamyl-[protein] + NH4(+). Its function is as follows. Involved in chemotaxis. Part of a chemotaxis signal transduction system that modulates chemotaxis in response to various stimuli. Catalyzes the demethylation of specific methylglutamate residues introduced into the chemoreceptors (methyl-accepting chemotaxis proteins or MCP) by CheR. Also mediates the irreversible deamidation of specific glutamine residues to glutamic acid. In Rhizobium meliloti (strain 1021) (Ensifer meliloti), this protein is Protein-glutamate methylesterase/protein-glutamine glutaminase of group 3 operon.